We begin with the raw amino-acid sequence, 156 residues long: Arginine repressor (156 aa).

The protein belongs to the ArgR family.

The protein localises to the cytoplasm. Its pathway is amino-acid biosynthesis; L-arginine biosynthesis [regulation]. Functionally, regulates arginine biosynthesis genes. This chain is Arginine repressor, found in Photobacterium profundum (strain SS9).